A 503-amino-acid chain; its full sequence is Arabinose import ATP-binding protein AraG 1 (503 aa).

ABC transporter domains lie at 5–240 (LRFD…MVGR) and 251–497 (RALG…LPQT). Residue 37–44 (GENGAGKS) coordinates ATP.

It belongs to the ABC transporter superfamily. Arabinose importer (TC 3.A.1.2.2) family. In terms of assembly, the complex is composed of two ATP-binding proteins (AraG), two transmembrane proteins (AraH) and a solute-binding protein (AraF).

Its subcellular location is the cell inner membrane. It catalyses the reaction L-arabinose(out) + ATP + H2O = L-arabinose(in) + ADP + phosphate + H(+). Functionally, part of the ABC transporter complex AraFGH involved in arabinose import. Responsible for energy coupling to the transport system. The sequence is that of Arabinose import ATP-binding protein AraG 1 from Burkholderia lata (strain ATCC 17760 / DSM 23089 / LMG 22485 / NCIMB 9086 / R18194 / 383).